The sequence spans 223 residues: Class E basic helix-loop-helix protein 23 (223 aa).

Positions 32-93 are disordered; the sequence is PETTRGFGAS…GVAVDARRRP (62 aa). The bHLH domain occupies 98 to 152; the sequence is SLRLSINARERRRMHDLNDALDGLRAVIPYAHSPSVRKLSKIATLLLAKNYILMQ.

In terms of tissue distribution, expressed in brain and retina.

It localises to the nucleus. In terms of biological role, may function as transcriptional repressor. May modulate the expression of genes required for the differentiation and/or maintenance of pancreatic and neuronal cell types. May be important for rod bipolar cell maturation. This Mus musculus (Mouse) protein is Class E basic helix-loop-helix protein 23 (Bhlhe23).